Here is a 478-residue protein sequence, read N- to C-terminus: Probable cytosolic Fe-S cluster assembly factor AGAP009023 (478 aa).

Residues Cys23, Cys69, Cys72, Cys75, Cys189, Cys245, Cys396, and Cys400 each contribute to the [4Fe-4S] cluster site.

This sequence belongs to the NARF family.

Component of the cytosolic iron-sulfur (Fe/S) protein assembly machinery. Required for maturation of extramitochondrial Fe/S proteins. The sequence is that of Probable cytosolic Fe-S cluster assembly factor AGAP009023 from Anopheles gambiae (African malaria mosquito).